The following is an 89-amino-acid chain: Small ribosomal subunit protein uS15 (89 aa).

It belongs to the universal ribosomal protein uS15 family. Part of the 30S ribosomal subunit. Forms a bridge to the 50S subunit in the 70S ribosome, contacting the 23S rRNA.

Functionally, one of the primary rRNA binding proteins, it binds directly to 16S rRNA where it helps nucleate assembly of the platform of the 30S subunit by binding and bridging several RNA helices of the 16S rRNA. In terms of biological role, forms an intersubunit bridge (bridge B4) with the 23S rRNA of the 50S subunit in the ribosome. The protein is Small ribosomal subunit protein uS15 of Streptococcus gordonii (strain Challis / ATCC 35105 / BCRC 15272 / CH1 / DL1 / V288).